A 476-amino-acid polypeptide reads, in one-letter code: Bifunctional protein HldE (476 aa).

Positions 1-319 (MKISLPAFEK…AALNLSHGES (319 aa)) are ribokinase. 195–198 (NMSE) is a binding site for ATP. Residue D264 is part of the active site. The segment at 345-476 (MTNGCFDILH…AIIENIMAKQ (132 aa)) is cytidylyltransferase.

In the N-terminal section; belongs to the carbohydrate kinase PfkB family. The protein in the C-terminal section; belongs to the cytidylyltransferase family. As to quaternary structure, homodimer.

It catalyses the reaction D-glycero-beta-D-manno-heptose 7-phosphate + ATP = D-glycero-beta-D-manno-heptose 1,7-bisphosphate + ADP + H(+). The enzyme catalyses D-glycero-beta-D-manno-heptose 1-phosphate + ATP + H(+) = ADP-D-glycero-beta-D-manno-heptose + diphosphate. The protein operates within nucleotide-sugar biosynthesis; ADP-L-glycero-beta-D-manno-heptose biosynthesis; ADP-L-glycero-beta-D-manno-heptose from D-glycero-beta-D-manno-heptose 7-phosphate: step 1/4. It functions in the pathway nucleotide-sugar biosynthesis; ADP-L-glycero-beta-D-manno-heptose biosynthesis; ADP-L-glycero-beta-D-manno-heptose from D-glycero-beta-D-manno-heptose 7-phosphate: step 3/4. Functionally, catalyzes the phosphorylation of D-glycero-D-manno-heptose 7-phosphate at the C-1 position to selectively form D-glycero-beta-D-manno-heptose-1,7-bisphosphate. Catalyzes the ADP transfer from ATP to D-glycero-beta-D-manno-heptose 1-phosphate, yielding ADP-D-glycero-beta-D-manno-heptose. This chain is Bifunctional protein HldE, found in Shewanella loihica (strain ATCC BAA-1088 / PV-4).